The following is a 154-amino-acid chain: 6,7-dimethyl-8-ribityllumazine synthase (154 aa).

5-amino-6-(D-ribitylamino)uracil is bound by residues F22, 56–58, and 81–83; these read AFE and VLI. 86–87 provides a ligand contact to (2S)-2-hydroxy-3-oxobutyl phosphate; sequence ET. H89 (proton donor) is an active-site residue. F114 contacts 5-amino-6-(D-ribitylamino)uracil. (2S)-2-hydroxy-3-oxobutyl phosphate is bound at residue R128.

Belongs to the DMRL synthase family.

The enzyme catalyses (2S)-2-hydroxy-3-oxobutyl phosphate + 5-amino-6-(D-ribitylamino)uracil = 6,7-dimethyl-8-(1-D-ribityl)lumazine + phosphate + 2 H2O + H(+). It participates in cofactor biosynthesis; riboflavin biosynthesis; riboflavin from 2-hydroxy-3-oxobutyl phosphate and 5-amino-6-(D-ribitylamino)uracil: step 1/2. Functionally, catalyzes the formation of 6,7-dimethyl-8-ribityllumazine by condensation of 5-amino-6-(D-ribitylamino)uracil with 3,4-dihydroxy-2-butanone 4-phosphate. This is the penultimate step in the biosynthesis of riboflavin. This chain is 6,7-dimethyl-8-ribityllumazine synthase, found in Chlamydia abortus (strain DSM 27085 / S26/3) (Chlamydophila abortus).